Here is a 399-residue protein sequence, read N- to C-terminus: Imidazolonepropionase (399 aa).

H74 and H76 together coordinate Fe(3+). Positions 74 and 76 each coordinate Zn(2+). 3 residues coordinate 4-imidazolone-5-propanoate: R83, Y146, and H176. N-formimidoyl-L-glutamate is bound at residue Y146. H238 provides a ligand contact to Fe(3+). H238 serves as a coordination point for Zn(2+). Q241 lines the 4-imidazolone-5-propanoate pocket. D312 lines the Fe(3+) pocket. Zn(2+) is bound at residue D312. N-formimidoyl-L-glutamate-binding residues include N314 and G316. Position 317 (S317) interacts with 4-imidazolone-5-propanoate.

Belongs to the metallo-dependent hydrolases superfamily. HutI family. The cofactor is Zn(2+). Fe(3+) is required as a cofactor.

Its subcellular location is the cytoplasm. It catalyses the reaction 4-imidazolone-5-propanoate + H2O = N-formimidoyl-L-glutamate. It functions in the pathway amino-acid degradation; L-histidine degradation into L-glutamate; N-formimidoyl-L-glutamate from L-histidine: step 3/3. Functionally, catalyzes the hydrolytic cleavage of the carbon-nitrogen bond in imidazolone-5-propanoate to yield N-formimidoyl-L-glutamate. It is the third step in the universal histidine degradation pathway. The chain is Imidazolonepropionase from Deinococcus deserti (strain DSM 17065 / CIP 109153 / LMG 22923 / VCD115).